The following is a 320-amino-acid chain: MSDMIQRAAEVPFELGGQRLDQIAAQLFPEHSRSRLAGWIKDGRLTVDGAVLRPRDIVHSGAQLVLEAEQEAQGEWLAQDIELEIVYEDEHILVIDKPAGLVVHPAAGHQDGTLLNALLYHVPDIANVPRAGIVHRLDKDTTGLMVVAKTLEAHTKLVAQLQARSVSRIYEAIVIGVITSGGTIDAPIGRHGVQRQKMAVVDAGKVAVSHYRVLERFRAHTHTRVKLETGRTHQIRVHMSHIGYPLVGDPVYGGRFRIPPVASQTLVQTLREFPRQALHARFLELDHPATGVRMKWESPLPEDFLWLLSLLRQDREAFVG.

Residues 18-90 (QRLDQIAAQL…IELEIVYEDE (73 aa)) enclose the S4 RNA-binding domain. The active site involves aspartate 138.

The protein belongs to the pseudouridine synthase RluA family.

The protein localises to the cytoplasm. It catalyses the reaction uridine(1911/1915/1917) in 23S rRNA = pseudouridine(1911/1915/1917) in 23S rRNA. Responsible for synthesis of pseudouridine from uracil at positions 1911, 1915 and 1917 in 23S ribosomal RNA. The polypeptide is Ribosomal large subunit pseudouridine synthase D (rluD) (Pseudomonas aeruginosa (strain ATCC 15692 / DSM 22644 / CIP 104116 / JCM 14847 / LMG 12228 / 1C / PRS 101 / PAO1)).